Consider the following 457-residue polypeptide: 3-isopropylmalate dehydratase large subunit (457 aa).

[4Fe-4S] cluster contacts are provided by Cys337, Cys397, and Cys400.

It belongs to the aconitase/IPM isomerase family. LeuC type 1 subfamily. Heterodimer of LeuC and LeuD. [4Fe-4S] cluster is required as a cofactor.

It catalyses the reaction (2R,3S)-3-isopropylmalate = (2S)-2-isopropylmalate. It participates in amino-acid biosynthesis; L-leucine biosynthesis; L-leucine from 3-methyl-2-oxobutanoate: step 2/4. Its function is as follows. Catalyzes the isomerization between 2-isopropylmalate and 3-isopropylmalate, via the formation of 2-isopropylmaleate. The sequence is that of 3-isopropylmalate dehydratase large subunit from Oenococcus oeni (strain ATCC BAA-331 / PSU-1).